Reading from the N-terminus, the 157-residue chain is Glutamyl-tRNA(Gln) amidotransferase subunit C, mitochondrial (157 aa).

This sequence belongs to the GatC family. Subunit of the heterotrimeric GatCAB amidotransferase (AdT) complex, composed of A, B and C subunits.

The protein resides in the mitochondrion. The enzyme catalyses L-glutamyl-tRNA(Gln) + L-glutamine + ATP + H2O = L-glutaminyl-tRNA(Gln) + L-glutamate + ADP + phosphate + H(+). Functionally, allows the formation of correctly charged Gln-tRNA(Gln) through the transamidation of misacylated Glu-tRNA(Gln) in the mitochondria. The reaction takes place in the presence of glutamine and ATP through an activated gamma-phospho-Glu-tRNA(Gln). This Drosophila virilis (Fruit fly) protein is Glutamyl-tRNA(Gln) amidotransferase subunit C, mitochondrial.